A 479-amino-acid chain; its full sequence is Aspartyl/glutamyl-tRNA(Asn/Gln) amidotransferase subunit B (479 aa).

Belongs to the GatB/GatE family. GatB subfamily. As to quaternary structure, heterotrimer of A, B and C subunits.

The catalysed reaction is L-glutamyl-tRNA(Gln) + L-glutamine + ATP + H2O = L-glutaminyl-tRNA(Gln) + L-glutamate + ADP + phosphate + H(+). It catalyses the reaction L-aspartyl-tRNA(Asn) + L-glutamine + ATP + H2O = L-asparaginyl-tRNA(Asn) + L-glutamate + ADP + phosphate + 2 H(+). Allows the formation of correctly charged Asn-tRNA(Asn) or Gln-tRNA(Gln) through the transamidation of misacylated Asp-tRNA(Asn) or Glu-tRNA(Gln) in organisms which lack either or both of asparaginyl-tRNA or glutaminyl-tRNA synthetases. The reaction takes place in the presence of glutamine and ATP through an activated phospho-Asp-tRNA(Asn) or phospho-Glu-tRNA(Gln). The sequence is that of Aspartyl/glutamyl-tRNA(Asn/Gln) amidotransferase subunit B from Streptococcus mutans serotype c (strain ATCC 700610 / UA159).